The primary structure comprises 240 residues: UDP-2,3-diacylglucosamine hydrolase (240 aa).

Mn(2+) contacts are provided by Asp8, His10, Asp41, Asn79, and His114. 79 to 80 contacts substrate; that stretch reads NR. Asp122, Ser160, Asn164, Lys167, and His195 together coordinate substrate. Mn(2+) is bound by residues His195 and His197.

This sequence belongs to the LpxH family. Mn(2+) is required as a cofactor.

The protein resides in the cell inner membrane. It carries out the reaction UDP-2-N,3-O-bis[(3R)-3-hydroxytetradecanoyl]-alpha-D-glucosamine + H2O = 2-N,3-O-bis[(3R)-3-hydroxytetradecanoyl]-alpha-D-glucosaminyl 1-phosphate + UMP + 2 H(+). Its pathway is glycolipid biosynthesis; lipid IV(A) biosynthesis; lipid IV(A) from (3R)-3-hydroxytetradecanoyl-[acyl-carrier-protein] and UDP-N-acetyl-alpha-D-glucosamine: step 4/6. In terms of biological role, hydrolyzes the pyrophosphate bond of UDP-2,3-diacylglucosamine to yield 2,3-diacylglucosamine 1-phosphate (lipid X) and UMP by catalyzing the attack of water at the alpha-P atom. Involved in the biosynthesis of lipid A, a phosphorylated glycolipid that anchors the lipopolysaccharide to the outer membrane of the cell. The chain is UDP-2,3-diacylglucosamine hydrolase from Salmonella paratyphi A (strain ATCC 9150 / SARB42).